The primary structure comprises 66 residues: Spore coat protein C (66 aa).

To B.subtilis protein YnzH.

The polypeptide is Spore coat protein C (cotC) (Bacillus subtilis (strain 168)).